The chain runs to 208 residues: Small ribosomal subunit protein uS4 (208 aa).

The region spanning 99-165 (RRLDNVVFQL…PRLKEILSSL (67 aa)) is the S4 RNA-binding domain.

The protein belongs to the universal ribosomal protein uS4 family. Part of the 30S ribosomal subunit. Contacts protein S5. The interaction surface between S4 and S5 is involved in control of translational fidelity.

Its function is as follows. One of the primary rRNA binding proteins, it binds directly to 16S rRNA where it nucleates assembly of the body of the 30S subunit. In terms of biological role, with S5 and S12 plays an important role in translational accuracy. This Desulfitobacterium hafniense (strain DSM 10664 / DCB-2) protein is Small ribosomal subunit protein uS4.